The following is a 117-amino-acid chain: Immunoglobulin heavy variable 4-4 (117 aa).

The N-terminal stretch at 1–19 (MKHLWFFLLLVAAPRWVLS) is a signal peptide. The framework-1 stretch occupies residues 20–44 (QVQLQESGPGLVKPSGTLSLTCAVS). In terms of domain architecture, Ig-like spans 20–117 (QVQLQESGPG…ADTAVYYCAR (98 aa)). Cys-41 and Cys-115 are joined by a disulfide. Positions 45 to 53 (GGSISSSNW) are complementarity-determining-1. The framework-2 stretch occupies residues 54-70 (WSWVRQPPGKGLEWIGE). The tract at residues 71 to 77 (IYHSGST) is complementarity-determining-2. The tract at residues 78–115 (NYNPSLKSRVTISVDKSKNQFSLKLSSVTAADTAVYYC) is framework-3. Residues 116 to 117 (AR) form a complementarity-determining-3 region.

In terms of assembly, immunoglobulins are composed of two identical heavy chains and two identical light chains; disulfide-linked.

It is found in the secreted. The protein resides in the cell membrane. V region of the variable domain of immunoglobulin heavy chains that participates in the antigen recognition. Immunoglobulins, also known as antibodies, are membrane-bound or secreted glycoproteins produced by B lymphocytes. In the recognition phase of humoral immunity, the membrane-bound immunoglobulins serve as receptors which, upon binding of a specific antigen, trigger the clonal expansion and differentiation of B lymphocytes into immunoglobulins-secreting plasma cells. Secreted immunoglobulins mediate the effector phase of humoral immunity, which results in the elimination of bound antigens. The antigen binding site is formed by the variable domain of one heavy chain, together with that of its associated light chain. Thus, each immunoglobulin has two antigen binding sites with remarkable affinity for a particular antigen. The variable domains are assembled by a process called V-(D)-J rearrangement and can then be subjected to somatic hypermutations which, after exposure to antigen and selection, allow affinity maturation for a particular antigen. The protein is Immunoglobulin heavy variable 4-4 of Homo sapiens (Human).